A 151-amino-acid chain; its full sequence is Deoxyuridine 5'-triphosphate nucleotidohydrolase (151 aa).

Substrate contacts are provided by residues 70–72, Asn83, 87–89, and Met97; these read RSG and LID.

This sequence belongs to the dUTPase family. Mg(2+) is required as a cofactor.

It carries out the reaction dUTP + H2O = dUMP + diphosphate + H(+). Its pathway is pyrimidine metabolism; dUMP biosynthesis; dUMP from dCTP (dUTP route): step 2/2. Its function is as follows. This enzyme is involved in nucleotide metabolism: it produces dUMP, the immediate precursor of thymidine nucleotides and it decreases the intracellular concentration of dUTP so that uracil cannot be incorporated into DNA. The chain is Deoxyuridine 5'-triphosphate nucleotidohydrolase from Shigella flexneri serotype 5b (strain 8401).